The chain runs to 396 residues: Phosphoglycerate kinase (396 aa).

Residues 21-23 (DLN), Arg-36, 59-62 (HFGR), Arg-118, and Arg-151 contribute to the substrate site. ATP contacts are provided by residues Lys-201, Glu-323, and 353–356 (GGDT).

Belongs to the phosphoglycerate kinase family. Monomer.

It is found in the cytoplasm. The enzyme catalyses (2R)-3-phosphoglycerate + ATP = (2R)-3-phospho-glyceroyl phosphate + ADP. It participates in carbohydrate degradation; glycolysis; pyruvate from D-glyceraldehyde 3-phosphate: step 2/5. This chain is Phosphoglycerate kinase, found in Rhodospirillum centenum (strain ATCC 51521 / SW).